A 238-amino-acid polypeptide reads, in one-letter code: Orotidine 5'-phosphate decarboxylase (238 aa).

Residues Asp13, Lys35, 62-71 (DLKFHDIPNT), Thr121, Arg182, Gln191, Gly211, and Arg212 contribute to the substrate site. Lys64 acts as the Proton donor in catalysis.

It belongs to the OMP decarboxylase family. Type 1 subfamily. In terms of assembly, homodimer.

The catalysed reaction is orotidine 5'-phosphate + H(+) = UMP + CO2. Its pathway is pyrimidine metabolism; UMP biosynthesis via de novo pathway; UMP from orotate: step 2/2. In terms of biological role, catalyzes the decarboxylation of orotidine 5'-monophosphate (OMP) to uridine 5'-monophosphate (UMP). This chain is Orotidine 5'-phosphate decarboxylase, found in Saccharophagus degradans (strain 2-40 / ATCC 43961 / DSM 17024).